Consider the following 343-residue polypeptide: Small ribosomal subunit biogenesis GTPase RsgA (343 aa).

Residues 116–275 (RGQLKPVAAN…LIDSPGIREF (160 aa)) enclose the CP-type G domain. GTP-binding positions include 163 to 166 (NKAD) and 217 to 225 (GQSGVGKSS). The Zn(2+) site is built by Cys-299, Cys-304, His-306, and Cys-312.

This sequence belongs to the TRAFAC class YlqF/YawG GTPase family. RsgA subfamily. Monomer. Associates with 30S ribosomal subunit, binds 16S rRNA. The cofactor is Zn(2+).

Its subcellular location is the cytoplasm. One of several proteins that assist in the late maturation steps of the functional core of the 30S ribosomal subunit. Helps release RbfA from mature subunits. May play a role in the assembly of ribosomal proteins into the subunit. Circularly permuted GTPase that catalyzes slow GTP hydrolysis, GTPase activity is stimulated by the 30S ribosomal subunit. This chain is Small ribosomal subunit biogenesis GTPase RsgA, found in Pseudomonas syringae pv. syringae (strain B728a).